The following is a 139-amino-acid chain: Basic phospholipase A2 beta-bungarotoxin A2 chain (139 aa).

Positions Ala1–Ala9 are cleaved as a signal peptide. Positions Ala10–Phe17 are excised as a propeptide. Tyr45, Gly47, and Gly49 together coordinate Ca(2+). Cys46 and Cys62 are disulfide-bonded. His65 is a catalytic residue. Asp66 provides a ligand contact to Ca(2+).

The protein belongs to the phospholipase A2 family. Group I subfamily. D49 sub-subfamily. Heterodimer; disulfide-linked. The A chains have phospholipase A2 activity and the B chains show homology with the basic protease inhibitors. Ca(2+) serves as cofactor. In terms of tissue distribution, expressed by the venom gland.

It localises to the secreted. The catalysed reaction is a 1,2-diacyl-sn-glycero-3-phosphocholine + H2O = a 1-acyl-sn-glycero-3-phosphocholine + a fatty acid + H(+). In terms of biological role, snake venom phospholipase A2 (PLA2) that shows presynaptic neurotoxicity. PLA2 catalyzes the calcium-dependent hydrolysis of the 2-acyl groups in 3-sn-phosphoglycerides. This chain is Basic phospholipase A2 beta-bungarotoxin A2 chain, found in Bungarus candidus (Malayan krait).